The primary structure comprises 591 residues: V-type ATP synthase alpha chain (591 aa).

232–239 (GPFGAGKT) lines the ATP pocket.

The protein belongs to the ATPase alpha/beta chains family.

The enzyme catalyses ATP + H2O + 4 H(+)(in) = ADP + phosphate + 5 H(+)(out). Produces ATP from ADP in the presence of a proton gradient across the membrane. The V-type alpha chain is a catalytic subunit. This chain is V-type ATP synthase alpha chain, found in Clostridium perfringens (strain ATCC 13124 / DSM 756 / JCM 1290 / NCIMB 6125 / NCTC 8237 / Type A).